The chain runs to 239 residues: Peptidyl-tRNA hydrolase (239 aa).

Tyr14 contacts tRNA. His19 (proton acceptor) is an active-site residue. Phe64, Asn66, and Asn112 together coordinate tRNA. The tract at residues 188 to 225 is disordered; that stretch reads GGKPDAEEPQAPKKQVGQSHIHKARNAAQPKKLPATGP.

The protein belongs to the PTH family. Monomer.

It localises to the cytoplasm. The enzyme catalyses an N-acyl-L-alpha-aminoacyl-tRNA + H2O = an N-acyl-L-amino acid + a tRNA + H(+). Its function is as follows. Hydrolyzes ribosome-free peptidyl-tRNAs (with 1 or more amino acids incorporated), which drop off the ribosome during protein synthesis, or as a result of ribosome stalling. Catalyzes the release of premature peptidyl moieties from peptidyl-tRNA molecules trapped in stalled 50S ribosomal subunits, and thus maintains levels of free tRNAs and 50S ribosomes. The sequence is that of Peptidyl-tRNA hydrolase from Sinorhizobium fredii (strain NBRC 101917 / NGR234).